A 247-amino-acid polypeptide reads, in one-letter code: Phycocyanobilin:ferredoxin oxidoreductase (247 aa).

Belongs to the HY2 family.

The catalysed reaction is (2R,3Z)-phycocyanobilin + 4 oxidized [2Fe-2S]-[ferredoxin] = biliverdin IXalpha + 4 reduced [2Fe-2S]-[ferredoxin] + 4 H(+). Its function is as follows. Catalyzes the four-electron reduction of biliverdin IX-alpha (2-electron reduction at both the A and D rings); the reaction proceeds via an isolatable 2-electron intermediate, 181,182-dihydrobiliverdin. This is Phycocyanobilin:ferredoxin oxidoreductase (pcyA) from Prochlorococcus marinus (strain SARG / CCMP1375 / SS120).